A 668-amino-acid chain; its full sequence is MLMWPQPHLPTHPHLPTHPHLPTHPHLPTHPHLPTHPHLPTHPHLPTHPMMSKETRQSKLAEAKEQLTDHHPQTNPSVGTAASDTKKKKINNGTNPETTTSGGCHSPEDEQKASHQHQEALRRELEAQVHTIRILTCQKTELQMALYYSQHAVKQLEGEARDLISRLHDSWKFAGELEQALSAVATQKKKADRYIEELTKERDALSLELYRNTITDEELKEKNAKLQEKLQLVESEKSEIQLNVKELKRKLERAKLLLPQQQLQAEADHLGKELQSVSAKLQAQVEENELWNRLNQQQEEKMWRQEEKIQEWEEKIQEQEEKIREQEEKIREQEEKMRRQEEMMWEKEEKMRRQEEMMWEKEEKMRRLEEMMWEKEEKIRELEEKMHEQEKIREQEEKRQEEEKIREQEKRQEQEAKMWRQEEKIREQEEKIREQEKKMWRQEEKIHEQEKIREEEKRQEQEEMWRQEEKIREQEEIWRQKEKMHEQEKIRKQEEKVWRQEEKMHDQEEKIREQEEKMWRQEEKIREQEEKIREQEEKIREQEEMMQEQEEKMGEQEEKMQEQEKMRRQEEKIREQEEKIREQKEKIREQEEKIWEQEEKIREQEEMMQEQEEKMWEQEEKMCEQEEKMQEQEEKMRRQEEKMWEQEVRLRQQEEKMQEHQEHLEAAI.

5 disordered regions span residues 1–120, 323–356, 384–466, 481–591, and 603–639; these read MLMW…HQEA, IREQ…RQEE, EKMH…EMWR, KEKM…REQE, and EQEE…MRRQ. Over residues 15 to 41 the composition is skewed to basic residues; the sequence is LPTHPHLPTHPHLPTHPHLPTHPHLPT. Positions 51 to 72 are enriched in basic and acidic residues; sequence MSKETRQSKLAEAKEQLTDHHP. Polar residues-rich tracts occupy residues 73-83 and 91-103; these read QTNPSVGTAAS and NNGT…TSGG. Residues 106-120 are compositionally biased toward basic and acidic residues; it reads SPEDEQKASHQHQEA. The stretch at 177-663 forms a coiled coil; sequence LEQALSAVAT…EEKMQEHQEH (487 aa).

This sequence belongs to the GOLGA6 family.

This chain is Golgin subfamily A member 6-like protein 1 (GOLGA6L1), found in Homo sapiens (Human).